The sequence spans 314 residues: Transcription factor DICHOTOMA (314 aa).

The 59-residue stretch at 87 to 145 folds into the TCP domain; the sequence is KKDRHSKINRPQGPRDRRVRLSIGIARKFFDLQEMLGFDKPSKTLDWLLTKSKEAIKEL. Positions 201 to 218 constitute a R domain; that stretch reads KESRAKARARARERTKEK.

The protein resides in the nucleus. In terms of biological role, transcription regulator involved in the dorsovental asymmetry of flowers. Promotes dorsal identity. This is Transcription factor DICHOTOMA (DICH) from Antirrhinum majus (Garden snapdragon).